A 301-amino-acid chain; its full sequence is MRIEGVVVATVTPFAKDGVNYEGLRALLSKIVEEGYQGVFPTSSTGEVTKLTFEERVKAMEVAKEVAGGRALVVAGTGTGDHLSTIEIARRYRDVGVDVLLITPPYYIQYDWAAVYAFYKRVLDKVDMPVVLYTIPLATGYNIPVEVFELVANEYSQVVGVKDSSGDFRYHLDLIHLLGKRLSVLQGLDLLFVPSLLMGAHGGVLAGPNFLGRITLEQYRLVKEGKTAEAVALHNKLMPLWRFMGGCGLVGKLGGKWPTLYKVATQMVRGIDMGPPREPLPPIDDRDRKELEKLLKDLGLI.

Residues Ser-44 and Tyr-107 each act as charge relay system in the active site. Tyr-133 (proton donor) is an active-site residue. The Schiff-base intermediate with substrate role is filled by Lys-162.

The protein belongs to the DapA family. Homotetramer.

The protein localises to the cytoplasm. This is an uncharacterized protein from Pyrobaculum neutrophilum (strain DSM 2338 / JCM 9278 / NBRC 100436 / V24Sta) (Thermoproteus neutrophilus).